A 428-amino-acid polypeptide reads, in one-letter code: Glutamate-1-semialdehyde 2,1-aminomutase (428 aa).

Lysine 265 carries the N6-(pyridoxal phosphate)lysine modification.

It belongs to the class-III pyridoxal-phosphate-dependent aminotransferase family. HemL subfamily. In terms of assembly, homodimer. It depends on pyridoxal 5'-phosphate as a cofactor.

The protein localises to the cytoplasm. It catalyses the reaction (S)-4-amino-5-oxopentanoate = 5-aminolevulinate. The protein operates within porphyrin-containing compound metabolism; protoporphyrin-IX biosynthesis; 5-aminolevulinate from L-glutamyl-tRNA(Glu): step 2/2. This chain is Glutamate-1-semialdehyde 2,1-aminomutase, found in Shewanella woodyi (strain ATCC 51908 / MS32).